A 285-amino-acid polypeptide reads, in one-letter code: MKVLFVIGSGAKHLEEEISRHGNLINVEIKKFPDGEKYVRVLERGKEAIVIQSTYHPQDENLIEALLLGDALSEAGFKKLKIVIPYLAYSRQDRVTKEGEPISVRAIMKMLGLYYDELYVFDIHNPKTLEHFPGIAKNIYPAEAIANYFKDKLGEGLILAPDKGALERAKRVAEVLGLEYSHFEKERISPTEVRMKPVDVDVNGKNVLIVDDIISTGGTMIKAANILRELGAKEIFVVATHGVFAEGAIERVSKAVNELAVTNTIPTEVSKISIVDYIVKLGEKE.

Residues 34–36 (DGE) and 91–92 (RQ) each bind ATP. 2 residues coordinate Mg(2+): His-124 and Asp-162. The active site involves Lys-185. D-ribose 5-phosphate contacts are provided by residues Arg-187, Asp-211, and 215 to 219 (STGGT).

It belongs to the ribose-phosphate pyrophosphokinase family. Class III (archaeal) subfamily. Requires Mg(2+) as cofactor.

The protein localises to the cytoplasm. The catalysed reaction is D-ribose 5-phosphate + ATP = 5-phospho-alpha-D-ribose 1-diphosphate + AMP + H(+). It participates in metabolic intermediate biosynthesis; 5-phospho-alpha-D-ribose 1-diphosphate biosynthesis; 5-phospho-alpha-D-ribose 1-diphosphate from D-ribose 5-phosphate (route I): step 1/1. Involved in the biosynthesis of the central metabolite phospho-alpha-D-ribosyl-1-pyrophosphate (PRPP) via the transfer of pyrophosphoryl group from ATP to 1-hydroxyl of ribose-5-phosphate (Rib-5-P). The chain is Ribose-phosphate pyrophosphokinase from Pyrococcus abyssi (strain GE5 / Orsay).